A 360-amino-acid chain; its full sequence is Luc7-like protein (360 aa).

Positions 143–206 form a coiled coil; the sequence is KEQNSKITEL…QEKNENKRMS (64 aa). Residues 255-360 are disordered; that stretch reads LGRTDFYNAP…DDRRKRDRNY (106 aa). Positions 269 to 293 are enriched in basic and acidic residues; it reads DSYRDDRRSSSSSYHDIDGRRDHRY. Over residues 312–321 the composition is skewed to low complexity; that stretch reads NNGRGSSRDN. Basic and acidic residues predominate over residues 329-360; it reads RDYRNDHGKDYDRKRERDYYNDDDRRKRDRNY.

Belongs to the Luc7 family.

The protein localises to the nucleus. In terms of biological role, may play a role in RNA splicing. In Dictyostelium discoideum (Social amoeba), this protein is Luc7-like protein (crop).